Here is a 64-residue protein sequence, read N- to C-terminus: Large ribosomal subunit protein uL30 (64 aa).

Part of the 50S ribosomal subunit. Post-translationally, the protein is methylated on either Ala-2 or Lys-3.

This is Large ribosomal subunit protein uL30 from Rhodopseudomonas palustris (strain ATCC BAA-98 / CGA009).